A 2080-amino-acid chain; its full sequence is Fatty acid synthase beta subunit TOXC (2080 aa).

The 228-residue stretch at glycine 170–lysine 397 folds into the Starter acyltransferase (SAT) domain. The active-site For acetyltransferase activity is serine 276. Residues serine 585–aspartate 830 form an enoyl reductase (ER) domain region. The segment at glycine 1155–leucine 1644 is dehydratase (DH) domain. Residues serine 1544–alanine 1662 enclose the MaoC-like domain. The Malonyl-CoA:ACP transacylase (MAT) domain maps to threonine 1682 to serine 2046. The tract at residues tyrosine 1683–serine 2046 is malonyl/palmitoyl transferase (MT/PT) domain. The active-site For malonyltransferase activity is serine 1828.

The protein belongs to the fungal fatty acid synthetase subunit beta family.

It catalyses the reaction acetyl-CoA + n malonyl-CoA + 2n NADPH + 4n H(+) = a long-chain-acyl-CoA + n CoA + n CO2 + 2n NADP(+).. The enzyme catalyses holo-[ACP] + acetyl-CoA = acetyl-[ACP] + CoA. The catalysed reaction is holo-[ACP] + malonyl-CoA = malonyl-[ACP] + CoA. It carries out the reaction a (3R)-hydroxyacyl-[ACP] = a (2E)-enoyl-[ACP] + H2O. It catalyses the reaction a 2,3-saturated acyl-[ACP] + NAD(+) = a (2E)-enoyl-[ACP] + NADH + H(+). The enzyme catalyses (9Z)-octadecenoyl-[ACP] + H2O = (9Z)-octadecenoate + holo-[ACP] + H(+). The protein operates within mycotoxin biosynthesis; HC-toxin biosynthesis. Functionally, fatty acid synthase beta subunit, part of the diffuse TOX2 gene cluster that mediates the biosynthesis of the HC-toxin, cyclic tetrapeptide of structure cyclo(D-Pro-L-Ala-D-Ala-L-Aeo), where Aeo stands for 2-amino-9,10-epoxi-8-oxodecanoic acid. HC-toxin is a determinant of specificity and virulence in the interaction between the producing fungus and its host, maize. TOXC contribute to the synthesis of the decanoic backbone of 2-amino-9,10-epoxi-8-oxodecanoic acid, an essential precursor for the production of the major forms of HC-toxin by the non-ribosomal peptide synthetase HTS1. The sequence is that of Fatty acid synthase beta subunit TOXC from Cochliobolus carbonum (Maize leaf spot fungus).